A 310-amino-acid polypeptide reads, in one-letter code: Homoserine O-acetyltransferase (310 aa).

Cysteine 142 acts as the Acyl-thioester intermediate in catalysis. The substrate site is built by lysine 163 and serine 192. Histidine 235 serves as the catalytic Proton acceptor. Residue glutamate 237 is part of the active site. Arginine 249 provides a ligand contact to substrate.

This sequence belongs to the MetA family.

The protein resides in the cytoplasm. The enzyme catalyses L-homoserine + acetyl-CoA = O-acetyl-L-homoserine + CoA. Its pathway is amino-acid biosynthesis; L-methionine biosynthesis via de novo pathway; O-acetyl-L-homoserine from L-homoserine: step 1/1. Its function is as follows. Transfers an acetyl group from acetyl-CoA to L-homoserine, forming acetyl-L-homoserine. The polypeptide is Homoserine O-acetyltransferase (Lachnospira eligens (strain ATCC 27750 / DSM 3376 / VPI C15-48 / C15-B4) (Eubacterium eligens)).